Here is a 456-residue protein sequence, read N- to C-terminus: Phospholipase A1 member A (456 aa).

The N-terminal stretch at 1–25 is a signal peptide; sequence MRPGLWETCFWLWGPLLWLSIGSSG. The Nucleophile role is filled by Ser-166. The active-site Charge relay system is the Asp-190. Cys-245 and Cys-258 form a disulfide bridge. His-260 (charge relay system) is an active-site residue. Disulfide bonds link Cys-282–Cys-293 and Cys-296–Cys-304. N-linked (GlcNAc...) asparagine glycosylation occurs at Asn-365.

This sequence belongs to the AB hydrolase superfamily. Lipase family.

The protein localises to the secreted. The enzyme catalyses a 1,2-diacyl-sn-glycero-3-phospho-L-serine + H2O = a 2-acyl-sn-glycero-3-phospho-L-serine + a fatty acid + H(+). It carries out the reaction 1,2-di-(9Z)-octadecenoyl-sn-glycero-3-phospho-L-serine + H2O = 2-(9Z-octadecenoyl)-sn-glycero-3-phospho-L-serine + (9Z)-octadecenoate + H(+). The catalysed reaction is 1-hexadecanoyl-2-(5Z,8Z,11Z,14Z-eicosatetraenoyl)-sn-glycero-3-phospho-L-serine + H2O = 2-(5Z,8Z,11Z,14Z)-eicosatetraenoyl-sn-glycero-3-phospho-L-serine + hexadecanoate + H(+). It catalyses the reaction a 1-acyl-sn-glycero-3-phospho-L-serine + H2O = sn-glycero-3-phospho-L-serine + a fatty acid + H(+). The enzyme catalyses 1-(9Z-octadecenoyl)-sn-glycero-3-phospho-L-serine + H2O = sn-glycero-3-phospho-L-serine + (9Z)-octadecenoate + H(+). In terms of biological role, hydrolyzes the ester bond of the acyl group attached at the sn-1 position of phosphatidylserines (phospholipase A1 activity) and 1-acyl-2-lysophosphatidylserines (lysophospholipase activity) in the pathway of phosphatidylserines acyl chain remodeling. Cleaves phosphatidylserines exposed on the outer leaflet of the plasma membrane of apoptotic cells producing 2-acyl-1-lysophosphatidylserines, which in turn enhance mast cell activation and histamine production. Has no activity toward other glycerophospholipids including phosphatidylcholines, phosphatidylethanolamines, phosphatidic acids or phosphatidylinositols, or glycerolipids such as triolein. The chain is Phospholipase A1 member A from Mus musculus (Mouse).